Consider the following 166-residue polypeptide: Large ribosomal subunit protein uL10 (166 aa).

The protein belongs to the universal ribosomal protein uL10 family. As to quaternary structure, part of the ribosomal stalk of the 50S ribosomal subunit. The N-terminus interacts with L11 and the large rRNA to form the base of the stalk. The C-terminus forms an elongated spine to which L12 dimers bind in a sequential fashion forming a multimeric L10(L12)X complex.

Forms part of the ribosomal stalk, playing a central role in the interaction of the ribosome with GTP-bound translation factors. The sequence is that of Large ribosomal subunit protein uL10 from Marinomonas sp. (strain MWYL1).